The chain runs to 262 residues: Acyl-[acyl-carrier-protein]--UDP-N-acetylglucosamine O-acyltransferase (262 aa).

Belongs to the transferase hexapeptide repeat family. LpxA subfamily. In terms of assembly, homotrimer.

Its subcellular location is the cytoplasm. It catalyses the reaction a (3R)-hydroxyacyl-[ACP] + UDP-N-acetyl-alpha-D-glucosamine = a UDP-3-O-[(3R)-3-hydroxyacyl]-N-acetyl-alpha-D-glucosamine + holo-[ACP]. It functions in the pathway glycolipid biosynthesis; lipid IV(A) biosynthesis; lipid IV(A) from (3R)-3-hydroxytetradecanoyl-[acyl-carrier-protein] and UDP-N-acetyl-alpha-D-glucosamine: step 1/6. Involved in the biosynthesis of lipid A, a phosphorylated glycolipid that anchors the lipopolysaccharide to the outer membrane of the cell. The protein is Acyl-[acyl-carrier-protein]--UDP-N-acetylglucosamine O-acyltransferase of Burkholderia mallei (strain NCTC 10247).